The primary structure comprises 228 residues: Octanoyltransferase (228 aa).

The BPL/LPL catalytic domain maps to 30 to 213; it reads NKVEDIMLLL…YFSRVFDFEP (184 aa). Residues 75-82, 143-145, and 156-158 each bind substrate; these read RGGDVTYH, AIG, and GFA. Residue Cys174 is the Acyl-thioester intermediate of the active site.

Belongs to the LipB family.

It is found in the cytoplasm. The catalysed reaction is octanoyl-[ACP] + L-lysyl-[protein] = N(6)-octanoyl-L-lysyl-[protein] + holo-[ACP] + H(+). It functions in the pathway protein modification; protein lipoylation via endogenous pathway; protein N(6)-(lipoyl)lysine from octanoyl-[acyl-carrier-protein]: step 1/2. In terms of biological role, catalyzes the transfer of endogenously produced octanoic acid from octanoyl-acyl-carrier-protein onto the lipoyl domains of lipoate-dependent enzymes. Lipoyl-ACP can also act as a substrate although octanoyl-ACP is likely to be the physiological substrate. This Desulforamulus reducens (strain ATCC BAA-1160 / DSM 100696 / MI-1) (Desulfotomaculum reducens) protein is Octanoyltransferase.